The following is an 84-amino-acid chain: Small ribosomal subunit protein bS20 (84 aa).

It belongs to the bacterial ribosomal protein bS20 family.

Its function is as follows. Binds directly to 16S ribosomal RNA. The polypeptide is Small ribosomal subunit protein bS20 (Phocaeicola vulgatus (strain ATCC 8482 / DSM 1447 / JCM 5826 / CCUG 4940 / NBRC 14291 / NCTC 11154) (Bacteroides vulgatus)).